The primary structure comprises 524 residues: Acetyl-CoA hydrolase (524 aa).

CoA is bound at residue 279-283; the sequence is GIGNI. The active-site 5-glutamyl coenzyme A thioester intermediate is E304. G398 is a binding site for CoA.

Belongs to the acetyl-CoA hydrolase/transferase family.

The protein resides in the cytoplasm. The enzyme catalyses acetyl-CoA + H2O = acetate + CoA + H(+). Functionally, presumably involved in regulating the intracellular acetyl-CoA pool for fatty acid and cholesterol synthesis and fatty acid oxidation. In Yarrowia lipolytica (strain CLIB 122 / E 150) (Yeast), this protein is Acetyl-CoA hydrolase (ACH1).